The chain runs to 874 residues: Alanine--tRNA ligase (874 aa).

Residues His-562, His-566, Cys-663, and His-667 each coordinate Zn(2+).

This sequence belongs to the class-II aminoacyl-tRNA synthetase family. Zn(2+) serves as cofactor.

The protein resides in the cytoplasm. The catalysed reaction is tRNA(Ala) + L-alanine + ATP = L-alanyl-tRNA(Ala) + AMP + diphosphate. Its function is as follows. Catalyzes the attachment of alanine to tRNA(Ala) in a two-step reaction: alanine is first activated by ATP to form Ala-AMP and then transferred to the acceptor end of tRNA(Ala). Also edits incorrectly charged Ser-tRNA(Ala) and Gly-tRNA(Ala) via its editing domain. This Bordetella pertussis (strain Tohama I / ATCC BAA-589 / NCTC 13251) protein is Alanine--tRNA ligase.